Here is a 488-residue protein sequence, read N- to C-terminus: Nitrogen metabolite repression protein nmr (488 aa).

The disordered stretch occupies residues 1–45 (MPAEILSELPLRPAPRDIKIPNAMHNEERRHKHSRSSYSEMSPLM). Residues 14-29 (APRDIKIPNAMHNEER) show a composition bias toward basic and acidic residues. The span at 36–45 (SSYSEMSPLM) shows a compositional bias: polar residues. Residues 71 to 76 (NAAGRQ), N165, K215, and 237 to 240 (YNNN) contribute to the NADP(+) site. Residues 75 to 76 (RQ), 165 to 167 (NTT), K215, and 237 to 240 (YNNN) contribute to the NAD(+) site. Residues 412 to 488 (EEYDGGGGNN…NKRADEEWLA (77 aa)) form a dispensable for NMR function region. The segment at 422–488 (IGNNHNNHHQ…NKRADEEWLA (67 aa)) is disordered. Over residues 438-459 (HQNGHQNGHNGINGHIVNGGVD) the composition is skewed to low complexity. A compositionally biased stretch (acidic residues) spans 460–473 (SESEEEDSDSDDEG).

Belongs to the NmrA-type oxidoreductase family. In terms of assembly, interacts with nit-2.

It is found in the nucleus. Its function is as follows. May be a redox sensor protein. Negative transcriptional regulator involved in the post-transcriptional modulation of the GATA-type transcription factor nit-2, forming part of a system controlling nitrogen metabolite repression. In Neurospora crassa (strain ATCC 24698 / 74-OR23-1A / CBS 708.71 / DSM 1257 / FGSC 987), this protein is Nitrogen metabolite repression protein nmr (nmr).